We begin with the raw amino-acid sequence, 122 residues long: Large ribosomal subunit protein uL14c (122 aa).

This sequence belongs to the universal ribosomal protein uL14 family. In terms of assembly, part of the 50S ribosomal subunit.

The protein localises to the plastid. Its subcellular location is the chloroplast. Binds to 23S rRNA. This chain is Large ribosomal subunit protein uL14c, found in Psilotum nudum (Whisk fern).